The primary structure comprises 282 residues: Acetyl-coenzyme A carboxylase carboxyl transferase subunit beta (282 aa).

In terms of domain architecture, CoA carboxyltransferase N-terminal spans 25–282 (VWRKCPHCNE…SQMLRIFMKQ (258 aa)). Cys29, Cys32, Cys48, and Cys51 together coordinate Zn(2+). The segment at 29-51 (CPHCNEIIYAKEIERNLNVCPKC) adopts a C4-type zinc-finger fold.

The protein belongs to the AccD/PCCB family. As to quaternary structure, acetyl-CoA carboxylase is a heterohexamer composed of biotin carboxyl carrier protein (AccB), biotin carboxylase (AccC) and two subunits each of ACCase subunit alpha (AccA) and ACCase subunit beta (AccD). Zn(2+) is required as a cofactor.

The protein resides in the cytoplasm. It catalyses the reaction N(6)-carboxybiotinyl-L-lysyl-[protein] + acetyl-CoA = N(6)-biotinyl-L-lysyl-[protein] + malonyl-CoA. It functions in the pathway lipid metabolism; malonyl-CoA biosynthesis; malonyl-CoA from acetyl-CoA: step 1/1. In terms of biological role, component of the acetyl coenzyme A carboxylase (ACC) complex. Biotin carboxylase (BC) catalyzes the carboxylation of biotin on its carrier protein (BCCP) and then the CO(2) group is transferred by the transcarboxylase to acetyl-CoA to form malonyl-CoA. This is Acetyl-coenzyme A carboxylase carboxyl transferase subunit beta from Syntrophotalea carbinolica (strain DSM 2380 / NBRC 103641 / GraBd1) (Pelobacter carbinolicus).